The chain runs to 500 residues: Aspartyl/glutamyl-tRNA(Asn/Gln) amidotransferase subunit B (500 aa).

It belongs to the GatB/GatE family. GatB subfamily. In terms of assembly, heterotrimer of A, B and C subunits.

It carries out the reaction L-glutamyl-tRNA(Gln) + L-glutamine + ATP + H2O = L-glutaminyl-tRNA(Gln) + L-glutamate + ADP + phosphate + H(+). The catalysed reaction is L-aspartyl-tRNA(Asn) + L-glutamine + ATP + H2O = L-asparaginyl-tRNA(Asn) + L-glutamate + ADP + phosphate + 2 H(+). Allows the formation of correctly charged Asn-tRNA(Asn) or Gln-tRNA(Gln) through the transamidation of misacylated Asp-tRNA(Asn) or Glu-tRNA(Gln) in organisms which lack either or both of asparaginyl-tRNA or glutaminyl-tRNA synthetases. The reaction takes place in the presence of glutamine and ATP through an activated phospho-Asp-tRNA(Asn) or phospho-Glu-tRNA(Gln). The sequence is that of Aspartyl/glutamyl-tRNA(Asn/Gln) amidotransferase subunit B from Clavibacter sepedonicus (Clavibacter michiganensis subsp. sepedonicus).